A 109-amino-acid polypeptide reads, in one-letter code: Parvalbumin alpha (109 aa).

EF-hand domains lie at 38–73 (KSKE…FTPE) and 77–109 (LSDK…VSES). Ca(2+) contacts are provided by Asp-51, Asp-53, Ser-55, Phe-57, Glu-59, Glu-62, Asp-90, Asp-92, Asp-94, Lys-96, and Glu-101.

Belongs to the parvalbumin family.

Functionally, in muscle, parvalbumin is thought to be involved in relaxation after contraction. It binds two calcium ions. This chain is Parvalbumin alpha, found in Pelophylax lessonae (Pool frog).